Consider the following 180-residue polypeptide: F17 fimbrial protein (180 aa).

An N-terminal signal peptide occupies residues 1–21; sequence MQKIQFILGILAAASSSATLA. Cysteines 37 and 77 form a disulfide.

This sequence belongs to the fimbrial protein family.

The protein resides in the fimbrium. Its function is as follows. Fimbriae (also called pili), polar filaments radiating from the surface of the bacterium to a length of 0.5-1.5 micrometers and numbering 100-300 per cell, enable bacteria to colonize the epithelium of specific host organs. The sequence is that of F17 fimbrial protein (F17a-A) from Escherichia coli.